The primary structure comprises 495 residues: Cytochrome P450 Tp4149 (495 aa).

2 consecutive transmembrane segments (helical) span residues 4 to 24 (ILSL…MFFI) and 208 to 228 (YLSM…SWVD). Asparagine 419 is a glycosylation site (N-linked (GlcNAc...) asparagine). A heme-binding site is contributed by cysteine 437.

The protein belongs to the cytochrome P450 family. The cofactor is heme.

It localises to the membrane. Its pathway is secondary metabolite biosynthesis; terpenoid biosynthesis. In terms of biological role, probably involved in the biosynthesis of germacrene-derived sesquiterpene lactones. This chain is Cytochrome P450 Tp4149, found in Tanacetum parthenium (Feverfew).